Here is a 787-residue protein sequence, read N- to C-terminus: Glycine-rich domain-containing protein 2 (787 aa).

As to expression, expressed in leaves, inflorescences, buds, flowers and immature siliques.

Involved in development and stress responses, probably through an auxin-dependent mechanism. The polypeptide is Glycine-rich domain-containing protein 2 (Arabidopsis thaliana (Mouse-ear cress)).